The following is a 1198-amino-acid chain: Sterol 3-beta-glucosyltransferase (1198 aa).

The span at 1–11 (MPITQIISASD) shows a compositional bias: polar residues. 2 disordered regions span residues 1-89 (MPIT…DNAD) and 124-162 (SQVD…PEVP). Residues 35-51 (RHHRLSRSLSKFKRWRG) show a composition bias toward basic residues. Positions 52 to 67 (RSNSSLSMGSSEQQEL) are enriched in low complexity. A Phosphoserine modification is found at Ser-76. Basic and acidic residues predominate over residues 146–162 (VKSKKENLKTKSHPEVP). Residues 187–236 (AKLRQRFCLDEQEPFLNDFPAWLLKDVLVQGHIFITTKHFLFFAYLPKNP) form the GRAM 1 domain. The PH domain occupies 238 to 336 (SVKMSGNLNI…WVNALKKEQF (99 aa)). A disordered region spans residues 427-465 (KSSFGKETPATAEQKNNGEDSKYLNVPTSAVPSSENGKK). The segment covering 452–461 (VPTSAVPSSE) has biased composition (polar residues). Residues 570–636 (ERFRYHFKFN…VDVETCYKEK (67 aa)) enclose the GRAM 2 domain. At Ser-693 the chain carries Phosphoserine. Residues Ser-749, Arg-750, Asp-752, Asn-1025, Asn-1053, Val-1054, His-1056, His-1069, Ser-1072, Gly-1073, Thr-1074, Asp-1093, and Gln-1094 each coordinate UDP-alpha-D-glucose.

It belongs to the glycosyltransferase 28 family.

The protein resides in the cytoplasm. It localises to the membrane. The enzyme catalyses a sterol + UDP-alpha-D-glucose = a sterol 3-beta-D-glucoside + UDP + H(+). It carries out the reaction ergosterol + UDP-alpha-D-glucose = ergosteryl 3-beta-D-glucoside + UDP + H(+). Sterol glycosyltransferase responsible for the glycosylation of ergosterol to form ergosterol-glucoside. Also shows activity in vitro on other sterols such as cholesterol, beta-sitosterol, stigmasterol and tomatidine. In contrasts to what is observed in Pichia pastoris and Aspergillus oryzae, is not involved in cytoplasm to vacuole transport (Cvt), pexophagy or nonselective autophagy in Saccharomyces cerevisiae. The chain is Sterol 3-beta-glucosyltransferase from Saccharomyces cerevisiae (strain YJM789) (Baker's yeast).